Here is a 398-residue protein sequence, read N- to C-terminus: Cytochrome b (398 aa).

4 consecutive transmembrane segments (helical) span residues 38-58 (FGSLAGICLVIQIVTGVFLAM), 82-104 (WLLRYMHANGASMFFIVVYLHIF), 119-139 (VWCLGVVIFLLMIVTAFIGYV), and 185-205 (FFSLHYLLPFILVGASLLHLA). 2 residues coordinate heme b: histidine 88 and histidine 102. Positions 189 and 203 each coordinate heme b. Position 208 (histidine 208) interacts with a ubiquinone. A run of 4 helical transmembrane segments spans residues 231 to 251 (FYVKDLVGWVAFAIFFSIWIF), 295 to 315 (AGGVAAIALVFISLLALPFFK), 327 to 347 (IYQGIFWLLLADCLLLGWIGC), and 354 to 373 (FVTIGQISSVFFFLFFAITP).

This sequence belongs to the cytochrome b family. The main subunits of complex b-c1 are: cytochrome b, cytochrome c1 and the Rieske protein. The cofactor is heme b.

It is found in the mitochondrion inner membrane. Its function is as follows. Component of the ubiquinol-cytochrome c reductase complex (complex III or cytochrome b-c1 complex) that is part of the mitochondrial respiratory chain. The b-c1 complex mediates electron transfer from ubiquinol to cytochrome c. Contributes to the generation of a proton gradient across the mitochondrial membrane that is then used for ATP synthesis. The sequence is that of Cytochrome b (MT-CYB) from Triticum aestivum (Wheat).